The primary structure comprises 592 residues: PiggyBac transposable element-derived protein 2 (592 aa).

Residues 31–69 (EEEESNNNREEIFIAPPDNAAGEFTDEDSGDEDSQRGAH) are disordered.

In Homo sapiens (Human), this protein is PiggyBac transposable element-derived protein 2 (PGBD2).